The following is a 382-amino-acid chain: Carbamoyl phosphate synthase small chain (382 aa).

Residues 1 to 189 (MIKSALLVLE…GLPEAKKEDE (189 aa)) form a CPSase region. The L-glutamine site is built by Ser-47, Gly-241, and Gly-243. The Glutamine amidotransferase type-1 domain occupies 193 to 380 (HVVAYDFGAK…IELIEQYRKT (188 aa)). The active-site Nucleophile is Cys-269. L-glutamine-binding residues include Leu-270, Gln-273, Asn-311, Gly-313, and Phe-314. Residues His-353 and Glu-355 contribute to the active site.

This sequence belongs to the CarA family. As to quaternary structure, composed of two chains; the small (or glutamine) chain promotes the hydrolysis of glutamine to ammonia, which is used by the large (or ammonia) chain to synthesize carbamoyl phosphate. Tetramer of heterodimers (alpha,beta)4.

The catalysed reaction is hydrogencarbonate + L-glutamine + 2 ATP + H2O = carbamoyl phosphate + L-glutamate + 2 ADP + phosphate + 2 H(+). It carries out the reaction L-glutamine + H2O = L-glutamate + NH4(+). Its pathway is amino-acid biosynthesis; L-arginine biosynthesis; carbamoyl phosphate from bicarbonate: step 1/1. The protein operates within pyrimidine metabolism; UMP biosynthesis via de novo pathway; (S)-dihydroorotate from bicarbonate: step 1/3. In terms of biological role, small subunit of the glutamine-dependent carbamoyl phosphate synthetase (CPSase). CPSase catalyzes the formation of carbamoyl phosphate from the ammonia moiety of glutamine, carbonate, and phosphate donated by ATP, constituting the first step of 2 biosynthetic pathways, one leading to arginine and/or urea and the other to pyrimidine nucleotides. The small subunit (glutamine amidotransferase) binds and cleaves glutamine to supply the large subunit with the substrate ammonia. The polypeptide is Carbamoyl phosphate synthase small chain (Escherichia coli O157:H7).